The sequence spans 163 residues: MMGKYLWALVYVTVMILIIVVEVESSLHRVGGGRYTWNSDVNFSDWANHQRFYSGDWLYFGFNRTRHNILQVNKSSYEQCVDNDYIFNITRGGRDVFQLLEPKPYYFICGRGYCLKGMKLAITVLPQPPPSAPTNFTSTTTPLIPPNAITAAILIFAFKALLL.

Positions 1-25 (MMGKYLWALVYVTVMILIIVVEVES) are cleaved as a signal peptide. The region spanning 26 to 126 (SLHRVGGGRY…GMKLAITVLP (101 aa)) is the Phytocyanin domain. Residues asparagine 42, asparagine 63, asparagine 73, asparagine 88, and asparagine 135 are each glycosylated (N-linked (GlcNAc...) asparagine). The cysteines at positions 80 and 114 are disulfide-linked. Serine 138 is lipidated: GPI-anchor amidated serine. The propeptide at 139–163 (TTTPLIPPNAITAAILIFAFKALLL) is removed in mature form.

Belongs to the early nodulin-like (ENODL) family.

The protein localises to the cell membrane. May act as a carbohydrate transporter. The sequence is that of Early nodulin-like protein 20 from Arabidopsis thaliana (Mouse-ear cress).